The sequence spans 1050 residues: Zinc finger and BTB domain-containing protein 11 (1050 aa).

The span at 143 to 156 (LDSGEESNESEDDL) shows a compositional bias: acidic residues. Positions 143 to 173 (LDSGEESNESEDDLSNFTSPPSTASKSSKKK) are disordered. Low complexity predominate over residues 157–168 (SNFTSPPSTASK). Residues 214-282 (CDVTLLIEGE…AYTSVLSFDF (69 aa)) enclose the BTB domain. Disordered regions lie at residues 373 to 514 (AEQN…EGGY) and 543 to 563 (LVQR…STEE). Residues 378–399 (EPEQQPAPQASPEAEASVSPVE) show a composition bias toward low complexity. Composition is skewed to basic and acidic residues over residues 478–501 (SKDE…DTYR) and 553–563 (PKRDAKESTEE). 2 consecutive C2H2-type zinc fingers follow at residues 566–588 (HKCG…TLKH) and 594–616 (YKCP…LIRH). A disordered region spans residues 617-641 (TRKEAPTSSSSNSTSTEASGGSSEK). A compositionally biased stretch (low complexity) spans 623-638 (TSSSSNSTSTEASGGS). C2H2-type zinc fingers lie at residues 648–670 (FICS…MLKH), 676–698 (HACQ…QSLH), 704–726 (FQCE…MSIH), 732–754 (YFCS…LKKH), 763–785 (YHCT…MNKH), 791–813 (FQCQ…VKSH), 819–843 (YRCN…KATH), 855–877 (RVCD…MNNH), 883–905 (FECL…VRTH), and 911–934 (YVCP…TKFH).

It localises to the nucleus. The protein localises to the nucleolus. In terms of biological role, may be involved in transcriptional regulation. This Mus musculus (Mouse) protein is Zinc finger and BTB domain-containing protein 11.